Reading from the N-terminus, the 324-residue chain is Putative divalent cation/proton antiporter TMEM165 (324 aa).

The first 33 residues, 1–33, serve as a signal peptide directing secretion; sequence MAAAAPGNGRASAPRLLLLFLVPLLWAPAAVRA. Residues 34–89 lie on the Lumenal side of the membrane; that stretch reads GPDEDLSHRNKEPPAPAQQLQPQPVAVQGPEPARVEKIFTPAAPVHTNKEDPATQT. The segment covering 35–45 has biased composition (basic and acidic residues); it reads PDEDLSHRNKE. Residues 35–59 are disordered; sequence PDEDLSHRNKEPPAPAQQLQPQPVA. The segment covering 50 to 59 has biased composition (low complexity); it reads AQQLQPQPVA. A helical transmembrane segment spans residues 90–110; it reads NLGFIHAFVAAISVIIVSELG. At 111 to 126 the chain is on the cytoplasmic side; that stretch reads DKTFFIAAIMAMRYNR. Residues 127–147 traverse the membrane as a helical segment; that stretch reads LTVLAGAMLALGLMTCLSVLF. The Lumenal segment spans residues 148-151; the sequence is GYAT. The chain crosses the membrane as a helical span at residues 152–172; that stretch reads TVIPRVYTYYVSTVLFAIFGI. Residues 173 to 228 lie on the Cytoplasmic side of the membrane; it reads RMLREGLKMSPDEGQEELEEVQAELKKKDEEFQRTKLLNGPGDVETGTSITVPQKK. Residues 184 to 211 adopt a coiled-coil conformation; the sequence is DEGQEELEEVQAELKKKDEEFQRTKLLN. A helical transmembrane segment spans residues 229–249; it reads WLHFISPIFVQALTLTFLAEW. The Lumenal segment spans residues 250 to 267; the sequence is GDRSQLTTIVLAAREDPY. Residues 268–288 form a helical membrane-spanning segment; sequence GVAVGGTVGHCLCTGLAVIGG. Residues 289–299 are Cytoplasmic-facing; that stretch reads RMIAQKISVRT. A helical transmembrane segment spans residues 300-320; that stretch reads VTIIGGIVFLAFAFSALFISP. Topologically, residues 321 to 324 are lumenal; the sequence is DSGF.

This sequence belongs to the GDT1 family. Ubiquitously expressed.

Its subcellular location is the golgi apparatus membrane. It carries out the reaction Ca(2+)(in) + n H(+)(out) = Ca(2+)(out) + n H(+)(in). The enzyme catalyses Mn(2+)(in) + n H(+)(out) = Mn(2+)(out) + n H(+)(in). In terms of biological role, putative divalent cation:proton antiporter that exchanges calcium or manganese ions for protons across the Golgi membrane. Mediates the reversible transport of calcium or manganese to the Golgi lumen driven by the proton gradient and possibly the membrane potential generated by V-ATPase. Provides calcium or manganese cofactors to resident Golgi enzymes and contributes to the maintenance of an acidic luminal Golgi pH required for proper functioning of the secretory pathway. Promotes Ca(2+) storage within the Golgi lumen of the mammary epithelial cells to be then secreted into milk. The transport mechanism and stoichiometry remains to be elucidated. The chain is Putative divalent cation/proton antiporter TMEM165 from Homo sapiens (Human).